The following is a 339-amino-acid chain: Glycerol-3-phosphate dehydrogenase [NAD(P)+] (339 aa).

Positions 11, 12, and 109 each coordinate NADPH. Sn-glycerol 3-phosphate is bound by residues lysine 109, glycine 140, and serine 142. Alanine 144 provides a ligand contact to NADPH. 5 residues coordinate sn-glycerol 3-phosphate: lysine 195, aspartate 249, serine 259, arginine 260, and asparagine 261. The Proton acceptor role is filled by lysine 195. Arginine 260 lines the NADPH pocket. NADPH is bound by residues valine 284 and glutamate 286.

Belongs to the NAD-dependent glycerol-3-phosphate dehydrogenase family.

Its subcellular location is the cytoplasm. The catalysed reaction is sn-glycerol 3-phosphate + NAD(+) = dihydroxyacetone phosphate + NADH + H(+). It carries out the reaction sn-glycerol 3-phosphate + NADP(+) = dihydroxyacetone phosphate + NADPH + H(+). It participates in membrane lipid metabolism; glycerophospholipid metabolism. Catalyzes the reduction of the glycolytic intermediate dihydroxyacetone phosphate (DHAP) to sn-glycerol 3-phosphate (G3P), the key precursor for phospholipid synthesis. The polypeptide is Glycerol-3-phosphate dehydrogenase [NAD(P)+] (Lactobacillus johnsonii (strain CNCM I-12250 / La1 / NCC 533)).